Here is a 124-residue protein sequence, read N- to C-terminus: KESAAAKFERQHMDPSMSSASSSNYCNQMMQSRKMTQDRCKPVNTFVHESLADVQAVCFQKNVACKNGQSNCYQSNSAMHITDCRESGNSKYPNCVYKATQAEKHIIVACEGNPYVPVHFDASV.

Residues 1-13 (KESAAAKFERQHM) are compositionally biased toward basic and acidic residues. Residues 1–24 (KESAAAKFERQHMDPSMSSASSSN) form a disordered region. Residues lysine 7 and arginine 10 each contribute to the substrate site. Histidine 12 (proton acceptor) is an active-site residue. Cystine bridges form between cysteine 26–cysteine 84, cysteine 40–cysteine 95, cysteine 58–cysteine 110, and cysteine 65–cysteine 72. Substrate contacts are provided by residues 41 to 45 (KPVNT), lysine 66, and arginine 85. Histidine 119 serves as the catalytic Proton donor.

Belongs to the pancreatic ribonuclease family. In terms of assembly, monomer. Interacts with and forms tight 1:1 complexes with RNH1. Dimerization of two such complexes may occur. Interaction with RNH1 inhibits this protein. In terms of tissue distribution, pancreas.

Its subcellular location is the secreted. It carries out the reaction an [RNA] containing cytidine + H2O = an [RNA]-3'-cytidine-3'-phosphate + a 5'-hydroxy-ribonucleotide-3'-[RNA].. It catalyses the reaction an [RNA] containing uridine + H2O = an [RNA]-3'-uridine-3'-phosphate + a 5'-hydroxy-ribonucleotide-3'-[RNA].. In terms of biological role, endonuclease that catalyzes the cleavage of RNA on the 3' side of pyrimidine nucleotides. Acts on single-stranded and double-stranded RNA. This is Ribonuclease pancreatic (RNASE1) from Dama dama (Fallow deer).